The sequence spans 308 residues: Very-long-chain enoyl-CoA reductase (308 aa).

At 1–86 (MKHYEVEILD…YFRDLGAQIS (86 aa)) the chain is on the cytoplasmic side. The residue at position 22 (K22) is an N6-acetyllysine. Phosphoserine is present on S58. K60 is subject to N6-acetyllysine. The chain crosses the membrane as a helical span at residues 87-106 (WVTVFLTEYAGPLFIYLLFY). Topologically, residues 107–124 (FRVPFIYGHKYDFTSSRH) are lumenal. Residues 125–147 (TVVHLACICHSFHYIKRLLETLF) form a helical membrane-spanning segment. The Cytoplasmic portion of the chain corresponds to 148-158 (VHRFSHGTMPL). Residues 159–180 (RNIFKNCTYYWGFAAWMAYYIN) form a helical membrane-spanning segment. Over 181–189 (HPLYTPPTY) the chain is Lumenal. The helical transmembrane segment at 190–216 (GAQQVKLALAIFVICQLGNFSIHMALR) threads the bilayer. Residues 217-245 (DLRPAGSKTRKIPYPTKNPFTWLFLLVSC) lie on the Cytoplasmic side of the membrane. Residues 246–262 (PNYTYEVGSWIGFAIMT) form a helical membrane-spanning segment. The Lumenal portion of the chain corresponds to 263–264 (QC). A helical transmembrane segment spans residues 265 to 292 (LPVALFSLVGFTQMTIWAKGKHRSYLKE). The Cytoplasmic portion of the chain corresponds to 293–308 (FRDYPPLRMPIIPFLL).

Belongs to the steroid 5-alpha reductase family. As to quaternary structure, interacts with ELOVL1 and LASS2. Interacts with HACD1 and HACD2 (via the third lumenal loop), but not with HACD3 and HACD4. Interacts with ELOVL1, ELOVL2, ELOVL3, ELOVL5 and ELOVL7 in the presence of acyl-CoA; interaction with HACD1/2 and that with ELOVLs are mutually exclusive. Post-translationally, glycosylated. As to expression, expressed in most tissues tested. Highly expressed in skeletal muscle.

It is found in the endoplasmic reticulum membrane. The catalysed reaction is a very-long-chain 2,3-saturated fatty acyl-CoA + NADP(+) = a very-long-chain (2E)-enoyl-CoA + NADPH + H(+). It carries out the reaction octadecanoyl-CoA + NADP(+) = (2E)-octadecenoyl-CoA + NADPH + H(+). It catalyses the reaction (2E,7Z,10Z,13Z,16Z)-docosapentaenoyl-CoA + NADPH + H(+) = (7Z,10Z,13Z,16Z)-docosatetraenoyl-CoA + NADP(+). The enzyme catalyses (2E,7Z,10Z,13Z,16Z,19Z)-docosahexaenoyl-CoA + NADPH + H(+) = (7Z,10Z,13Z,16Z,19Z)-docosapentaenoyl-CoA + NADP(+). The catalysed reaction is (2E,8Z,11Z,14Z)-eicosatetraenoyl-CoA + NADPH + H(+) = (8Z,11Z,14Z)-eicosatrienoyl-CoA + NADP(+). It carries out the reaction (2E)-hexadecenoyl-CoA + NADPH + H(+) = hexadecanoyl-CoA + NADP(+). The protein operates within lipid metabolism; fatty acid biosynthesis. It participates in lipid metabolism; sphingolipid metabolism. In terms of biological role, involved in both the production of very long-chain fatty acids for sphingolipid synthesis and the degradation of the sphingosine moiety in sphingolipids through the sphingosine 1-phosphate metabolic pathway. Catalyzes the last of the four reactions of the long-chain fatty acids elongation cycle. This endoplasmic reticulum-bound enzymatic process, allows the addition of 2 carbons to the chain of long- and very long-chain fatty acids/VLCFAs per cycle. This enzyme reduces the trans-2,3-enoyl-CoA fatty acid intermediate to an acyl-CoA that can be further elongated by entering a new cycle of elongation. Thereby, it participates in the production of VLCFAs of different chain lengths that are involved in multiple biological processes as precursors of membrane lipids and lipid mediators. Catalyzes the saturation step of the sphingosine 1-phosphate metabolic pathway, the conversion of trans-2-hexadecenoyl-CoA to palmitoyl-CoA. This is Very-long-chain enoyl-CoA reductase (TECR) from Homo sapiens (Human).